Reading from the N-terminus, the 336-residue chain is HTH-type transcriptional repressor PurR (336 aa).

Positions 2 to 56 (ATIKDVAKLAGVSTTTVSHVINKTRFVAEDTSKAVWDAIQQLNYSPSAVARSLKV) constitute an HTH lacI-type domain. The segment at residues 4–23 (IKDVAKLAGVSTTTVSHVIN) is a DNA-binding region (H-T-H motif). Residues 48-56 (SAVARSLKV) mediate DNA binding. Hypoxanthine-binding residues include Tyr-73, Lys-188, Phe-219, and Asp-273.

Homodimer.

It functions in the pathway purine metabolism; purine nucleotide biosynthesis [regulation]. Its function is as follows. Is the main repressor of the genes involved in the de novo synthesis of purine nucleotides, regulating purB, purC, purEK, purF, purHD, purL, purMN and guaBA expression. PurR is allosterically activated to bind its cognate DNA by binding the purine corepressors, hypoxanthine or guanine, thereby effecting transcription repression. In Actinobacillus pleuropneumoniae serotype 5b (strain L20), this protein is HTH-type transcriptional repressor PurR.